The following is a 163-amino-acid chain: Troponin C (163 aa).

Serine 1 is subject to N-acetylserine. EF-hand domains are found at residues 14–49 (EQIS…LGMS), 50–85 (ISRE…AMQD), 90–125 (IPDD…CAGD), and 127–162 (LTDD…LKVR). Lysine 20 is modified (N6,N6-dimethyllysine; alternate). At lysine 20 the chain carries N6-methyllysine; alternate. The Ca(2+) site is built by aspartate 27, aspartate 29, aspartate 33, glutamate 38, aspartate 63, aspartate 65, serine 67, threonine 69, glutamate 74, aspartate 103, asparagine 105, aspartate 107, and glutamate 114.

This sequence belongs to the troponin C family.

Functionally, troponin is the central regulatory protein of striated muscle contraction. Tn consists of three components: Tn-I which is the inhibitor of actomyosin ATPase, Tn-T which contains the binding site for tropomyosin and Tn-C. The binding of calcium to Tn-C abolishes the inhibitory action of Tn on actin filaments. The protein is Troponin C of Branchiostoma lanceolatum (Common lancelet).